The chain runs to 737 residues: Oligopeptide transporter 3 (737 aa).

A run of 16 helical transmembrane segments spans residues 45–65, 69–89, 117–137, 153–173, 215–235, 255–275, 289–309, 357–377, 418–438, 446–466, 478–498, 532–552, 604–624, 629–649, 650–670, and 681–701; these read AWFL…FFTY, PLTI…KFMA, VIIT…AYSI, FICG…WAGI, FLVA…LFPI, VGSG…AGIS, ILNV…VCYW, LYLS…FTAT, WWFY…SFVW, WWGM…IGVI, IIGQ…NLIF, AQLV…WWML, VWLF…SKIF, WIPL…PPAT, PTNI…VFNY, and VLSA…FFAL.

This sequence belongs to the oligopeptide OPT transporter (TC 2.A.67.1) family. In terms of tissue distribution, strong expression in flowers, leaves and roots. Preferentially expressed in the vascular tissues of seedlings and mature plants as well as in pollen and developing embryos.

Its subcellular location is the membrane. May be involved in the translocation of tetra- and pentapeptides across the cellular membrane in an energy-dependent manner. Also acts as a metal transporter that could be a component of the copper transport machinery. Essential for early embryo development. The chain is Oligopeptide transporter 3 (OPT3) from Arabidopsis thaliana (Mouse-ear cress).